The primary structure comprises 299 residues: Pseudouridine-5'-phosphate glycosidase (299 aa).

Catalysis depends on Glu23, which acts as the Proton donor. Residues Lys84 and Val104 each coordinate substrate. Residue Asp136 participates in Mn(2+) binding. Position 138 to 140 (138 to 140) interacts with substrate; that stretch reads SAD. Lys157 (nucleophile) is an active-site residue.

Belongs to the pseudouridine-5'-phosphate glycosidase family. In terms of assembly, homotrimer. The cofactor is Mn(2+).

It catalyses the reaction D-ribose 5-phosphate + uracil = psi-UMP + H2O. In terms of biological role, catalyzes the reversible cleavage of pseudouridine 5'-phosphate (PsiMP) to ribose 5-phosphate and uracil. Functions biologically in the cleavage direction, as part of a pseudouridine degradation pathway. The chain is Pseudouridine-5'-phosphate glycosidase from Solibacter usitatus (strain Ellin6076).